Here is a 646-residue protein sequence, read N- to C-terminus: P-selectin (646 aa).

The N-terminal stretch at 1-41 (MASCPKAIWNWRFQRAVFRTVQLLCFSVLIFEVINQKEVSA) is a signal peptide. At 42–587 (WTYHYSNKTY…QAGPLTIQET (546 aa)) the chain is on the extracellular side. 3 N-linked (GlcNAc...) asparagine glycosylation sites follow: N48, N54, and N80. Residues 58–158 (AFCQKYYTDL…PCWKRKRALC (101 aa)) enclose the C-type lectin domain. Cystine bridges form between C60–C158, C131–C150, C163–C174, C168–C183, C185–C194, C200–C244, C230–C257, C262–C306, C292–C319, C324–C368, C354–C381, C386–C430, C416–C443, C458–C502, C488–C515, C520–C564, and C550–C577. Residues E121, N123, and N124 each contribute to the Ca(2+) site. N123 contacts a carbohydrate. A carbohydrate-binding residues include E133 and N146. Residues N146 and D147 each coordinate Ca(2+). The EGF-like domain maps to 159–195 (YRASCQDMSCSKQGECIETIGNYTCSCYPGFYGPECE). The N-linked (GlcNAc...) asparagine glycan is linked to N180. Sushi domains lie at 198–259 (RECG…QCVA), 260–321 (VQCP…VCKA), 322–383 (LQCQ…ECQA), 384–445 (VTCA…TCEE), 456–517 (VQCP…TCRA), and 518–579 (VKCA…TCQA). N212 and N219 each carry an N-linked (GlcNAc...) asparagine glycan. A glycan (N-linked (GlcNAc...) asparagine) is linked at N336. A glycan (N-linked (GlcNAc...) asparagine) is linked at N481. 3 N-linked (GlcNAc...) asparagine glycosylation sites follow: N532, N539, and N557. A helical transmembrane segment spans residues 588 to 611 (LTYVGGAAAGTTGLVTGSILLALL). Residues 612–646 (RRRCRQKDDGKSPLNPQSHLGTYGVFTNAAFDPSP) lie on the Cytoplasmic side of the membrane. Positions 634–637 (YGVF) match the Endocytosis signal motif. The tract at residues 637–646 (FTNAAFDPSP) is interaction with SNX17.

It belongs to the selectin/LECAM family. In terms of assembly, interacts with SNX17. Interacts with SELPLG/PSGL1 and PODXL2 and mediates neutrophil adhesion and leukocyte rolling. This interaction requires the sialyl-Lewis X epitope of SELPLG and PODXL2, and specific tyrosine sulfation on SELPLG. Interacts (via C-type lectin domain) with alpha-IIb/beta3 integrin ITGA2B:ITGB3 and alpha-V/beta-3 integrin ITGAV:ITGB3. Interacts with alpha5/beta1 integrin ITGA5:ITGB1 and alpha4/beta1 integrin ITGA4:ITGB. Stored in the alpha-granules of platelets and Weibel-Palade bodies of endothelial cells. Upon cell activation by agonists, P-selectin is transported rapidly to the cell surface.

The protein localises to the cell membrane. Functionally, ca(2+)-dependent receptor for myeloid cells that binds to carbohydrates on neutrophils and monocytes. Mediates the interaction of activated endothelial cells or platelets with leukocytes. The ligand recognized is sialyl-Lewis X. Mediates rapid rolling of leukocyte rolling over vascular surfaces during the initial steps in inflammation through interaction with SELPLG. Mediates cell-cell interactions and cell adhesion via the interaction with integrin alpha-IIb/beta3 (ITGA2B:ITGB3) and integrin alpha-V/beta-3 (ITGAV:ITGB3). The protein is P-selectin (SELP) of Bos taurus (Bovine).